A 513-amino-acid polypeptide reads, in one-letter code: Putative zinc finger CCCH domain-containing protein 51 (513 aa).

Positions 155-180 are disordered; sequence SMPRNSPNAGRNLVGHPHSSSKSSSK. Residues 170–180 show a composition bias toward low complexity; sequence HPHSSSKSSSK. The C3H1-type zinc finger occupies 176 to 204; that stretch reads KSSSKPCHFHFFRGYCKKGVNCQFFHGSV. One can recognise an HTH OST-type domain in the interval 218-299; the sequence is SLSKLDMEIR…HGQYHVVLVE (82 aa). The RRM domain occupies 325–411; it reads NQIYMTFPVH…SELRMTWLKS (87 aa).

This is Putative zinc finger CCCH domain-containing protein 51 from Oryza sativa subsp. japonica (Rice).